A 575-amino-acid polypeptide reads, in one-letter code: MVTPLTGTHEGVSCDGCAFTAFAGNRYKCLRCSDYDLCFSCFTTKNYGDQQTIADIPIHDESHPMQLILSSVDFDLVYQGDPTRHYDERKIVSFTCPYCNITGLTERQFGTHVLSQHPEAPGYSVICPLCIGNTEMEHIQSKETENLSVHWTEIHLHTMENLFRSTEPITTRPVQRRPMLARRGNRAGVSRTAAQGRPLQDEIGAEMAALLRNMGPDSVEDIRRFTEMMTVPLLPGIRSSQRLMTSTGDRPTVVVESAVTHQDPNVQQVIRPLATIPIYPPTSDESGDETPQPAADSADESEDDNDIQELDDMQPIVEDEALKKDEFWKTLKTRISEEDVDLILETMKSTAKVKEDIDDKMPVWTQRPLKRLANAAQVTTTSDSEGDPGWLPLSFETTPIRSTGCGGYWSDKRFLRPRKMQREQSVASSNAEIMEKAEIALALIRASCLHEPVFTDPTKPDIALKEALQHLRLGEKPAKMMEYQAAEELVNMPERDPITTGEMEVEIPDFTARGYGQIVDGNIPLGVVPEADEAITNSEDEEIVGGETSGDDEDEQEDDENDSQDSSVPEEINID.

The ZZ-type zinc finger occupies 9-73 (HEGVSCDGCA…PMQLILSSVD (65 aa)). Zn(2+) contacts are provided by Cys-14, Cys-17, Cys-29, Cys-32, Cys-38, Cys-41, His-59, and His-63. Disordered regions lie at residues 277-306 (PIYPPTSDESGDETPQPAADSADESEDDND) and 530-575 (EADE…INID). Composition is skewed to acidic residues over residues 297–306 (SADESEDDND) and 530–563 (EADEAITNSEDEEIVGGETSGDDEDEQEDDENDS).

The protein belongs to the KCMF1 family.

It localises to the cytoplasm. It is found in the late endosome. The protein localises to the lysosome. The enzyme catalyses S-ubiquitinyl-[E2 ubiquitin-conjugating enzyme]-L-cysteine + [acceptor protein]-L-lysine = [E2 ubiquitin-conjugating enzyme]-L-cysteine + N(6)-ubiquitinyl-[acceptor protein]-L-lysine.. It participates in protein modification; protein ubiquitination. In terms of biological role, E3 ubiquitin-protein ligase which accepts ubiquitin from an E2 ubiquitin-conjugating enzyme and then transfers it to targeted substrates, promoting their degradation by the proteasome. The protein is E3 ubiquitin-protein ligase kcmf-1 of Caenorhabditis elegans.